The following is a 380-amino-acid chain: Cytochrome b (380 aa).

4 consecutive transmembrane segments (helical) span residues 34-54 (FGSLLGICLMTQILTGLLLAM), 78-99 (WLIRNLHANGASLFFICIYLHI), 114-134 (WNTGVILLLTLMATAFVGYVL), and 179-199 (FFALHFLLPFIIAGLTLIHLT). Positions 84 and 98 each coordinate heme b. Heme b is bound by residues H183 and H197. H202 lines the a ubiquinone pocket. 4 consecutive transmembrane segments (helical) span residues 227-247 (TKDILGFIILLLPLMTLAMFA), 289-309 (LGGVLALAASVLVLFLAPFLH), 321-341 (LSQLLFWTLVANLFILTWIGS), and 348-368 (FIITGQLASLTYFTILLILFP).

The protein belongs to the cytochrome b family. As to quaternary structure, the cytochrome bc1 complex contains 11 subunits: 3 respiratory subunits (MT-CYB, CYC1 and UQCRFS1), 2 core proteins (UQCRC1 and UQCRC2) and 6 low-molecular weight proteins (UQCRH/QCR6, UQCRB/QCR7, UQCRQ/QCR8, UQCR10/QCR9, UQCR11/QCR10 and a cleavage product of UQCRFS1). This cytochrome bc1 complex then forms a dimer. The cofactor is heme b.

It is found in the mitochondrion inner membrane. Its function is as follows. Component of the ubiquinol-cytochrome c reductase complex (complex III or cytochrome b-c1 complex) that is part of the mitochondrial respiratory chain. The b-c1 complex mediates electron transfer from ubiquinol to cytochrome c. Contributes to the generation of a proton gradient across the mitochondrial membrane that is then used for ATP synthesis. The sequence is that of Cytochrome b (MT-CYB) from Aphanotriccus audax (Black-billed flycatcher).